Consider the following 1007-residue polypeptide: Serine/threonine-protein kinase atg1 (1007 aa).

The 307-residue stretch at 30–336 (YTRLSEIGRG…FDVYFAHKVL (307 aa)) folds into the Protein kinase domain. ATP contacts are provided by residues 36 to 44 (IGRGSFAVV) and Lys-59. Residue Asp-174 is the Proton acceptor of the active site. 4 disordered regions span residues 343–489 (LVAD…KEHA), 524–586 (GGQA…PTSA), 795–817 (RLPSDHPSHPSNLSVGSSLGSGT), and 878–900 (SRPGQSGGADRADARRDNEDGGQ). Over residues 373 to 387 (MKRENALSGGVRDEP) the composition is skewed to basic and acidic residues. A compositionally biased stretch (polar residues) spans 396 to 410 (AMTQSPRPETPSTPM). A compositionally biased stretch (basic and acidic residues) spans 477-489 (KPVEKAKDEKEHA). Positions 534 to 555 (SGAAPGTPPAGGSSPHASPSKA) are enriched in low complexity. Over residues 563–579 (SRADSAHVRQNSYDRRY) the composition is skewed to basic and acidic residues. Over residues 805–817 (SNLSVGSSLGSGT) the composition is skewed to low complexity. The segment covering 887-896 (DRADARRDNE) has biased composition (basic and acidic residues).

It belongs to the protein kinase superfamily. Ser/Thr protein kinase family. APG1/unc-51/ULK1 subfamily. In terms of assembly, homodimer. Forms a ternary complex with ATG13 and ATG17.

It is found in the cytoplasm. The protein localises to the preautophagosomal structure membrane. The enzyme catalyses L-seryl-[protein] + ATP = O-phospho-L-seryl-[protein] + ADP + H(+). The catalysed reaction is L-threonyl-[protein] + ATP = O-phospho-L-threonyl-[protein] + ADP + H(+). In terms of biological role, serine/threonine protein kinase involved in the cytoplasm to vacuole transport (Cvt) and found to be essential in autophagy, where it is required for the formation of autophagosomes. Involved in the clearance of protein aggregates which cannot be efficiently cleared by the proteasome. Required for selective autophagic degradation of the nucleus (nucleophagy) as well as for mitophagy which contributes to regulate mitochondrial quantity and quality by eliminating the mitochondria to a basal level to fulfill cellular energy requirements and preventing excess ROS production. Also involved in endoplasmic reticulum-specific autophagic process, in selective removal of ER-associated degradation (ERAD) substrates. Plays a key role in ATG9 and ATG23 cycling through the pre-autophagosomal structure and is necessary to promote ATG18 binding to ATG9 through phosphorylation of ATG9. Catalyzes phosphorylation of ATG4, decreasing the interaction between ATG4 and ATG8 and impairing deconjugation of PE-conjugated forms of ATG8. This chain is Serine/threonine-protein kinase atg1, found in Aspergillus niger (strain ATCC MYA-4892 / CBS 513.88 / FGSC A1513).